The sequence spans 238 residues: 1-(5-phosphoribosyl)-5-[(5-phosphoribosylamino)methylideneamino] imidazole-4-carboxamide isomerase (238 aa).

Catalysis depends on D8, which acts as the Proton acceptor. D129 serves as the catalytic Proton donor.

The protein belongs to the HisA/HisF family.

It is found in the cytoplasm. It catalyses the reaction 1-(5-phospho-beta-D-ribosyl)-5-[(5-phospho-beta-D-ribosylamino)methylideneamino]imidazole-4-carboxamide = 5-[(5-phospho-1-deoxy-D-ribulos-1-ylimino)methylamino]-1-(5-phospho-beta-D-ribosyl)imidazole-4-carboxamide. It participates in amino-acid biosynthesis; L-histidine biosynthesis; L-histidine from 5-phospho-alpha-D-ribose 1-diphosphate: step 4/9. This chain is 1-(5-phosphoribosyl)-5-[(5-phosphoribosylamino)methylideneamino] imidazole-4-carboxamide isomerase, found in Anaeromyxobacter dehalogenans (strain 2CP-C).